A 491-amino-acid polypeptide reads, in one-letter code: uncharacterized protein (491 aa).

266–273 contributes to the ATP binding site; sequence GIQGTGKS.

Belongs to the AAA ATPase family. Highly divergent.

The protein localises to the plastid. The protein resides in the chloroplast. This is an uncharacterized protein from Porphyra purpurea (Red seaweed).